The primary structure comprises 200 residues: MNSTAKLPKIILASTSPFRKALLQKLRLPFITENPAIDETPYPHESVVDMVNRLSLAKAHAVAEKHPNAIIIASDQSATYQGQAVGKPHTYPNAVQQLNQFSGETIHFNTGLVVFDNRTQKTYQTLDVTKVTFRTLSETDIHNYLILEEPYQCAGSFKSEGLGITLFSKIEGKDPNALIGLPLIDLTSFLKQCDIQLPFL.

D75 functions as the Proton acceptor in the catalytic mechanism.

This sequence belongs to the Maf family. YceF subfamily. A divalent metal cation serves as cofactor.

The protein localises to the cytoplasm. The enzyme catalyses N(7)-methyl-GTP + H2O = N(7)-methyl-GMP + diphosphate + H(+). In terms of biological role, nucleoside triphosphate pyrophosphatase that hydrolyzes 7-methyl-GTP (m(7)GTP). May have a dual role in cell division arrest and in preventing the incorporation of modified nucleotides into cellular nucleic acids. This Hydrogenovibrio crunogenus (strain DSM 25203 / XCL-2) (Thiomicrospira crunogena) protein is 7-methyl-GTP pyrophosphatase.